Here is a 144-residue protein sequence, read N- to C-terminus: Interferon-induced transmembrane protein 2 (144 aa).

Residue M1 is modified to N-acetylmethionine. Over 1-56 (MSHNSQAFLSTNAGLPPSYETIKEEYGVTELGEPSNSAVVRTTVINMPREVSVPDH) the chain is Cytoplasmic. Y19 is subject to Phosphotyrosine. Positions 57–77 (VVWSLFNTLFFNACCLGFVAY) form an intramembrane region, helical. S-palmitoyl cysteine attachment occurs at residues C70, C71, and C104. Topologically, residues 78–110 (AYSVKSRDRKMVGDVVGAQAYASTAKCLNISSL) are cytoplasmic. The chain crosses the membrane as a helical span at residues 111–131 (IFSILMVIICIIIFSTTSVVV). Residues 132 to 144 (FQSFAQRTPHSGF) are Extracellular-facing.

This sequence belongs to the CD225/Dispanin family. In terms of assembly, interacts with CD81. Post-translationally, palmitoylation on membrane-proximal cysteines controls clustering in membrane compartments and antiviral activity. In terms of processing, phosphorylation at Tyr-19 is required for endosomal and lysosomal location. As to expression, predominantly expressed in nascent primordial germ cells, as well as in gonadal germ cells.

The protein localises to the cell membrane. The protein resides in the lysosome membrane. It is found in the late endosome membrane. Functionally, IFN-induced antiviral protein which inhibits the entry of viruses to the host cell cytoplasm, permitting endocytosis, but preventing subsequent viral fusion and release of viral contents into the cytosol. Active against multiple viruses, including influenza A virus, SARS coronavirus (SARS-CoV), Marburg virus (MARV) and Ebola virus (EBOV), Dengue virus (DNV) and West Nile virus (WNV). Can inhibit: influenza virus hemagglutinin protein-mediated viral entry, MARV and EBOV GP1,2-mediated viral entry and SARS-CoV S protein-mediated viral entry. Induces cell cycle arrest and mediates apoptosis by caspase activation and in p53-independent manner. This chain is Interferon-induced transmembrane protein 2 (Ifitm2), found in Mus musculus (Mouse).